The sequence spans 308 residues: MLNEAAGARRIDVLDEVTPTMAEDVLRLVAEAARTDGQQAVSEQGRLQLRGRREGVRHLLLTEEPSGKLVGYAQLEDTDPVEAPAAELVVHPAHRGQGHGRALGVTLLRESGKRLRVWAHGGHSSARHLAQVLGLTLFRELRQMRRPLGPPATLDIPEPVLPEGVTVRTFRPGEDEAAWLAANAAAFAHHPEQGSLTLRDLEDRMGEPWFDPEGFFLAERGGEIVGFHWTKVHAQERLGEVYVVGVRPEAQGGGLGRSLTAIGLRHLAGRGLPTAMLYVDADNFPAVAVYGRQGFTTYETDLMYRTET.

2 consecutive N-acetyltransferase domains span residues 12 to 149 and 165 to 308; these read DVLD…RPLG and VTVR…RTET. Glutamate 43 lines the 1D-myo-inositol 2-(L-cysteinylamino)-2-deoxy-alpha-D-glucopyranoside pocket. 88 to 90 contributes to the acetyl-CoA binding site; that stretch reads LVV. 1D-myo-inositol 2-(L-cysteinylamino)-2-deoxy-alpha-D-glucopyranoside is bound by residues glutamate 192, lysine 231, and glutamate 240. Residues 244 to 246 and 251 to 257 each bind acetyl-CoA; these read VGV and QGGGLGR. Tyrosine 278 lines the 1D-myo-inositol 2-(L-cysteinylamino)-2-deoxy-alpha-D-glucopyranoside pocket.

It belongs to the acetyltransferase family. MshD subfamily. In terms of assembly, monomer.

It carries out the reaction 1D-myo-inositol 2-(L-cysteinylamino)-2-deoxy-alpha-D-glucopyranoside + acetyl-CoA = mycothiol + CoA + H(+). Its function is as follows. Catalyzes the transfer of acetyl from acetyl-CoA to desacetylmycothiol (Cys-GlcN-Ins) to form mycothiol. This chain is Mycothiol acetyltransferase, found in Streptomyces bingchenggensis (strain BCW-1).